A 245-amino-acid polypeptide reads, in one-letter code: Derlin-1 (245 aa).

Topologically, residues 1–17 (MDAGVWYRSLPRFTRYW) are cytoplasmic. The chain crosses the membrane as a helical span at residues 18-38 (LTATVVLSMLCRFDVIPLHWL). The Lumenal segment spans residues 39–58 (HLDRSAVFSKLQLWRCMTSL). Residues 59–79 (FVFPISSNTAFHFLINCFFIV) traverse the membrane as a helical segment. Over 80 to 99 (QYSSKLEKDQYSRSPADYLY) the chain is Cytoplasmic. Residues 100-120 (LLIVSAVLANIGGMIFNVYFL) form a helical membrane-spanning segment. Over 121 to 156 (MDTLVLAITYIWCQLNKDVTVSFWFGTRFKAMYLPW) the chain is Lumenal. The chain crosses the membrane as a helical span at residues 157 to 177 (VLAAFEFIFHFSLASLVGIFV). The Cytoplasmic segment spans residues 178–245 (GHVYYFFKFQ…WGRGMTLGRN (68 aa)). The tract at residues 218-245 (FGLPPESRAPPRQATESPWGRGMTLGRN) is disordered.

This sequence belongs to the derlin family.

The protein resides in the endoplasmic reticulum membrane. May be involved in the degradation process of specific misfolded endoplasmic reticulum (ER) luminal proteins. May also involved in endoplasmic reticulum stress-induced pre-emptive quality control, a mechanism that selectively attenuates the translocation of newly synthesized proteins into the endoplasmic reticulum and reroutes them to the cytosol for proteasomal degradation. The chain is Derlin-1 from Drosophila melanogaster (Fruit fly).